The primary structure comprises 156 residues: Nascent polypeptide-associated complex subunit beta (156 aa).

Disordered stretches follow at residues 1–42 (MPID…KDDT) and 129–156 (QANE…AEVE). The 66-residue stretch at 38-103 (NKDDTKLHNQ…AQEKNLQELF (66 aa)) folds into the NAC-A/B domain.

This sequence belongs to the NAC-beta family. In terms of assembly, part of the nascent polypeptide-associated complex (NAC), consisting of EGD2 and EGD1. NAC associates with ribosomes via EGD1.

It is found in the cytoplasm. It localises to the nucleus. Its function is as follows. Component of the nascent polypeptide-associated complex (NAC), a dynamic component of the ribosomal exit tunnel, protecting the emerging polypeptides from interaction with other cytoplasmic proteins to ensure appropriate nascent protein targeting. The NAC complex also promotes mitochondrial protein import by enhancing productive ribosome interactions with the outer mitochondrial membrane and blocks the inappropriate interaction of ribosomes translating non-secretory nascent polypeptides with translocation sites in the membrane of the endoplasmic reticulum. EGD1 may act as a transcription factor that exert a negative effect on the expression of several genes that are transcribed by RNA polymerase II. The chain is Nascent polypeptide-associated complex subunit beta (EGD1) from Candida glabrata (strain ATCC 2001 / BCRC 20586 / JCM 3761 / NBRC 0622 / NRRL Y-65 / CBS 138) (Yeast).